Reading from the N-terminus, the 417-residue chain is Guanine nucleotide-exchange factor SEC12 (417 aa).

Over 1–388 (MGRRRGVELY…QLHLLPSRRS (388 aa)) the chain is Cytoplasmic. A 3'-nitrotyrosine modification is found at tyrosine 10. Residues 101 to 135 (KGSKAEKSGSKEQGPRQRKGAPPAEKKSGAQVHPE) are disordered. Residues 103 to 115 (SKAEKSGSKEQGP) show a composition bias toward basic and acidic residues. WD repeat units follow at residues 152 to 191 (SNEP…KVLE), 194 to 232 (AHEG…TQLQ), and 298 to 337 (CGHE…RLYY). The chain crosses the membrane as a helical span at residues 389-409 (VPVWLLLLLCVGLIIVTILLL). The Lumenal portion of the chain corresponds to 410 to 417 (QTAFPGFL).

As to quaternary structure, interacts with SAR1B (GDP-bound form). Interacts with MIA2; recruits PREB to endoplasmic reticulum exit sites. Interacts with CIDEB; facilitating loading of SCAP-SREBP into COPII vesicles.

The protein localises to the endoplasmic reticulum membrane. It is found in the nucleus. In terms of biological role, guanine nucleotide exchange factor (GEF) that regulates the assembly of the coat protein complex II/COPII in endoplasmic reticulum (ER) to Golgi vesicle-mediated transport. Selectively activates SAR1A and SAR1B by promoting the exchange of guanosine diphosphate (GDP) for guanosine triphosphate (GTP) in these small GTPases. In their activated GTP-bound state, SAR1A and SAR1B insert into the membrane of the endoplasmic reticulum where they recruit the remainder of the coat protein complex II/COPII which is responsible for both the sorting of proteins and the deformation and budding of membranes into vesicles destined to the Golgi. Was first identified based on its probable role in the regulation of pituitary gene transcription. Binds to the prolactin gene (PRL) promoter and seems to activate transcription. This is Guanine nucleotide-exchange factor SEC12 from Mus musculus (Mouse).